A 163-amino-acid polypeptide reads, in one-letter code: Dual specificity phosphatase 28 (163 aa).

A Tyrosine-protein phosphatase domain is found at 10–151 (PFARVAPALF…LQKYEQTLQA (142 aa)). The active-site Phosphocysteine intermediate is cysteine 95.

The protein belongs to the protein-tyrosine phosphatase family. Non-receptor class dual specificity subfamily. In terms of assembly, monomer.

The enzyme catalyses O-phospho-L-tyrosyl-[protein] + H2O = L-tyrosyl-[protein] + phosphate. It carries out the reaction O-phospho-L-seryl-[protein] + H2O = L-seryl-[protein] + phosphate. It catalyses the reaction O-phospho-L-threonyl-[protein] + H2O = L-threonyl-[protein] + phosphate. In terms of biological role, has phosphatase activity with the synthetic substrate 6,8-difluoro-4-methylumbelliferyl phosphate (in vitro). Has almost no detectable activity with phosphotyrosine, even less activity with phosphothreonine and displays complete lack of activity with phosphoserine. The poor activity with phosphotyrosine may be due to steric hindrance by bulky amino acid sidechains that obstruct access to the active site. This Mus musculus (Mouse) protein is Dual specificity phosphatase 28 (Dusp28).